The sequence spans 122 residues: Large ribosomal subunit protein uL14c (122 aa).

It belongs to the universal ribosomal protein uL14 family. Part of the 50S ribosomal subunit.

The protein localises to the plastid. Binds to 23S rRNA. This chain is Large ribosomal subunit protein uL14c, found in Euglena longa (Euglenophycean alga).